The sequence spans 648 residues: ATP-dependent DNA helicase Q1 (648 aa).

In terms of domain architecture, Helicase ATP-binding spans 100 to 275 (INVTMARKDI…QKILCVGKCL (176 aa)). 113–120 (MPTGGGKS) provides a ligand contact to ATP. A DEVH box motif is present at residues 219–222 (DEVH). Positions 299 to 451 (DFTEDIVKLI…EMVSYCQNVS (153 aa)) constitute a Helicase C-terminal domain. C453, C471, C475, and C478 together coordinate Zn(2+). K514 and K522 each carry N6-acetyllysine. Position 597 is a phosphoserine (S597). A disordered region spans residues 601-648 (ALSEARQVEQVDSKGEEQSSGNSQKSKSRLQPSGSKNAGAKKRKLDDA). The span at 606–617 (RQVEQVDSKGEE) shows a compositional bias: basic and acidic residues. Over residues 618-636 (QSSGNSQKSKSRLQPSGSK) the composition is skewed to polar residues. S633 is modified (phosphoserine). The span at 639 to 648 (GAKKRKLDDA) shows a compositional bias: basic residues.

It belongs to the helicase family. RecQ subfamily. May form homodimers or higher order oligomers. Interacts with EXO1. Interacts with MLH1. Interacts with PARP1. Requires Mg(2+) as cofactor. Mn(2+) is required as a cofactor. Zn(2+) serves as cofactor. In terms of tissue distribution, expressed in all tissues examined. Only expressed in spermatocytes. Expression increases at pachytene (17 days old) and decreases after completion of meiosis II (7 weeks old).

The protein localises to the nucleus. It catalyses the reaction Couples ATP hydrolysis with the unwinding of duplex DNA by translocating in the 3'-5' direction.. The enzyme catalyses ATP + H2O = ADP + phosphate + H(+). It carries out the reaction dATP + H2O = dADP + phosphate + H(+). In terms of biological role, DNA helicase that plays a role in DNA damage repair and genome stability. Exhibits a magnesium- and ATP-dependent DNA-helicase activity that unwinds single- and double-stranded DNA in a 3'-5' direction. Plays a role in restoring regressed replication forks. Required to restart stalled replication forks induced by abortive topoisomerase 1 and 2 lesions. May play a role in the repair of DNA that is damaged by ultraviolet light or other mutagens. The sequence is that of ATP-dependent DNA helicase Q1 (Recql) from Mus musculus (Mouse).